We begin with the raw amino-acid sequence, 136 residues long: Small ribosomal subunit protein uS8 (136 aa).

This sequence belongs to the universal ribosomal protein uS8 family. As to quaternary structure, part of the 30S ribosomal subunit. Contacts proteins S5 and S12.

In terms of biological role, one of the primary rRNA binding proteins, it binds directly to 16S rRNA central domain where it helps coordinate assembly of the platform of the 30S subunit. This is Small ribosomal subunit protein uS8 from Persephonella marina (strain DSM 14350 / EX-H1).